Here is a 403-residue protein sequence, read N- to C-terminus: Mitochondrial intermembrane space import and assembly protein 40 (403 aa).

The N-terminal 31 residues, 1-31 (MLRNLVVRNACRNRPSIQVARGLCRHQTRRL), are a transit peptide targeting the mitochondrion. The Mitochondrial matrix portion of the chain corresponds to 33 to 46 (ASSPQFGRNSNQEK). A helical; Signal-anchor for type II membrane protein membrane pass occupies residues 47–66 (TAGFIMGILSMAGALYFIAP). The Mitochondrial intermembrane portion of the chain corresponds to 67–403 (NRKPLFASRK…KEPLNEESKP (337 aa)). Basic and acidic residues-rich tracts occupy residues 75–84 (RKVESDKTAE), 101–118 (NNSK…KNDE), 147–168 (EDNK…KDDE), 206–230 (SEKK…KTTT), and 262–271 (EELRKQEEKQ). The segment at 75–292 (RKVESDKTAE…GAYNPDTGEI (218 aa)) is disordered. Intrachain disulfides connect C296/C298, C307/C340, and C317/C330. Positions 304–348 (HGPCGEEFKSAFSCFVYSEAEPKGIDCVEKFQHMQDCFRKYPEHY) constitute a CHCH domain. 2 consecutive short sequence motifs (cx9C motif) follow at residues 307–317 (CGEEFKSAFSC) and 330–340 (CVEKFQHMQDC). The disordered stretch occupies residues 351–403 (QLKETSDDEEPQDKVKVNTIESAPNVSSAKENAAKKAEQSDVKKEPLNEESKP). A compositionally biased stretch (polar residues) spans 369–378 (TIESAPNVSS). Residues 382–403 (NAAKKAEQSDVKKEPLNEESKP) show a composition bias toward basic and acidic residues.

As to quaternary structure, monomer. Interacts with the FAD-linked sulfhydryl oxidase ERV1 and with the substrate proteins COX17, TIM9, and TIM13, forming transient intermolecular disulfide bridges. Interacts with FCJ1. Cu(2+) is required as a cofactor. It depends on Zn(2+) as a cofactor.

The protein resides in the mitochondrion inner membrane. Its function is as follows. Required for the import and folding of small cysteine-containing proteins (small Tim) in the mitochondrial intermembrane space (IMS). Forms a redox cycle with ERV1 that involves a disulfide relay system. Precursor proteins to be imported into the IMS are translocated in their reduced form into the mitochondria. The oxidized form of MIA40 forms a transient intermolecular disulfide bridge with the reduced precursor protein, resulting in oxidation of the precursor protein that now contains an intramolecular disulfide bond and is able to undergo folding in the IMS. Reduced MIA40 is reoxidized by FAD-linked sulfhydryl oxidase ERV1. The polypeptide is Mitochondrial intermembrane space import and assembly protein 40 (MIA40) (Saccharomyces cerevisiae (strain ATCC 204508 / S288c) (Baker's yeast)).